We begin with the raw amino-acid sequence, 853 residues long: E3 ubiquitin-protein ligase RNF216 (853 aa).

3 disordered regions span residues 33-102 (TISD…DDIV), 125-152 (PLEVQNQSSEDSETELLSNPGEPAASVD), and 165-228 (PYFQ…AHPL). Over residues 53 to 73 (QQEDDLDDDVILTEDDSEDEY) the composition is skewed to acidic residues. Lysine 89 is covalently cross-linked (Glycyl lysine isopeptide (Lys-Gly) (interchain with G-Cter in SUMO2)). Glycyl lysine isopeptide (Lys-Gly) (interchain with G-Cter in SUMO2) cross-links involve residues lysine 339 and lysine 342. Serine 407 carries the phosphoserine modification. Glycyl lysine isopeptide (Lys-Gly) (interchain with G-Cter in SUMO2) cross-links involve residues lysine 413, lysine 418, lysine 436, lysine 447, and lysine 473. The stretch at 463-479 (VKQEQEFYEQKIKEMAE) forms a coiled coil. Residues 499-716 (QLIECRCCYG…SPGAPCQECS (218 aa)) form a TRIAD supradomain region. Residues cysteine 503, cysteine 506, cysteine 525, cysteine 528, cysteine 593, and cysteine 596 each contribute to the Zn(2+) site. An RING-type 1 zinc finger spans residues 503 to 552 (CRCCYGEFPFEELTQCADAHLFCKECLIRYAQEAVFGSGKSELSCMEGSC). The IBR-type zinc finger occupies 571 to 636 (YKYYERKAEE…LWKEHNGLTC (66 aa)). Residue lysine 607 forms a Glycyl lysine isopeptide (Lys-Gly) (interchain with G-Cter in SUMO2) linkage. Residues cysteine 611, cysteine 616, cysteine 621, cysteine 624, histidine 631, and cysteine 636 each coordinate Zn(2+). Residues lysine 646 and lysine 654 each participate in a glycyl lysine isopeptide (Lys-Gly) (interchain with G-Cter in SUMO2) cross-link. The Zn(2+) site is built by cysteine 663 and cysteine 666. The RING-type 2; atypical zinc finger occupies 663–691 (CHKCGTGLIKSEGCNRMSCRCGAQMCYLC). The active site involves cysteine 676. Positions 681, 683, 688, 691, 704, and 712 each coordinate Zn(2+). A coiled-coil region spans residues 725-751 (TEDDEKLIEEIQKEAEEEQKRKNGENT). Glycyl lysine isopeptide (Lys-Gly) (interchain with G-Cter in SUMO2) cross-links involve residues lysine 753 and lysine 761.

In terms of assembly, interacts with UBE2L3 and to some extent with UBE2L6. Interacts with TRAF3, TLR3, TLR4, TLR5 and TLR9. Isoform 3/ZIN binds RIPK1. In terms of processing, auto-ubiquitinated. Post-translationally, phosphorylation at Ser-719 enhances acceptor ubiquitin binding and chain-type specificity towards 'Lys-63' di-ubiquitin but not di-ubiquitin with other linkage types.

It is found in the cytoplasm. The protein localises to the cytoplasmic vesicle. It localises to the clathrin-coated vesicle. The enzyme catalyses S-ubiquitinyl-[E2 ubiquitin-conjugating enzyme]-L-cysteine + [acceptor protein]-L-lysine = [E2 ubiquitin-conjugating enzyme]-L-cysteine + N(6)-ubiquitinyl-[acceptor protein]-L-lysine.. Its pathway is protein modification; protein ubiquitination. Allosterically activated by 'Lys-63'-linked di-ubiquitin. Its function is as follows. E3 ubiquitin ligase which accepts ubiquitin from specific E2 ubiquitin-conjugating enzymes, and then transfers it to substrates promoting their ubiquitination. Plays a role in the regulation of antiviral responses by promoting the degradation of TRAF3, TLR4 and TLR9. In turn, down-regulates NF-kappa-B and IRF3 activation as well as beta interferon production. Also participates in the regulation of autophagy by ubiquitinating BECN1 leading to its degradation and autophagy inhibition. Plays a role in ARC-dependent synaptic plasticity by mediating ARC ubiquitination resulting in its rapid proteasomal degradation. Plays aso an essential role in spermatogenesis and male fertility. Mechanistically, regulates meiosis by promoting the degradation of PRKACB through the ubiquitin-mediated lysosome pathway. Modulates the gonadotropin-releasing hormone signal pathway by affecting the stability of STAU2 that is required for the microtubule-dependent transport of neuronal RNA from the cell body to the dendrite. The chain is E3 ubiquitin-protein ligase RNF216 (Rnf216) from Mus musculus (Mouse).